A 278-amino-acid chain; its full sequence is Elongation factor Ts (278 aa).

Positions 81–84 (TDFV) are involved in Mg(2+) ion dislocation from EF-Tu.

It belongs to the EF-Ts family.

It is found in the cytoplasm. Functionally, associates with the EF-Tu.GDP complex and induces the exchange of GDP to GTP. It remains bound to the aminoacyl-tRNA.EF-Tu.GTP complex up to the GTP hydrolysis stage on the ribosome. This Thermobifida fusca (strain YX) protein is Elongation factor Ts.